The chain runs to 170 residues: Protein ECM34 (170 aa).

N-linked (GlcNAc...) asparagine glycosylation occurs at asparagine 45. 2 consecutive transmembrane segments (helical) span residues 51–71 (IWLL…GIGG) and 98–118 (TIVI…FKMY).

Belongs to the DUP/COS family.

The protein resides in the membrane. In terms of biological role, may be involved in cell wall organization and biogenesis. This chain is Protein ECM34 (ECM34), found in Saccharomyces cerevisiae (strain ATCC 204508 / S288c) (Baker's yeast).